The following is a 202-amino-acid chain: Glycerol-3-phosphate acyltransferase (202 aa).

5 helical membrane passes run 6–26 (LTLG…AVLV), 56–76 (SAAL…YIAF), 82–102 (SVSL…PIFF), 118–138 (APIG…MVLI), and 141–161 (YSSL…WYLD).

This sequence belongs to the PlsY family. In terms of assembly, probably interacts with PlsX.

It localises to the cell inner membrane. The catalysed reaction is an acyl phosphate + sn-glycerol 3-phosphate = a 1-acyl-sn-glycero-3-phosphate + phosphate. It functions in the pathway lipid metabolism; phospholipid metabolism. Catalyzes the transfer of an acyl group from acyl-phosphate (acyl-PO(4)) to glycerol-3-phosphate (G3P) to form lysophosphatidic acid (LPA). This enzyme utilizes acyl-phosphate as fatty acyl donor, but not acyl-CoA or acyl-ACP. This Shewanella woodyi (strain ATCC 51908 / MS32) protein is Glycerol-3-phosphate acyltransferase.